Reading from the N-terminus, the 390-residue chain is Homeobox protein Meis1 (390 aa).

The 84-residue stretch at 108 to 191 (GGDVCSSESF…PIDLVIDDRD (84 aa)) folds into the MEIS N-terminal domain. Over residues 188 to 202 (DDRDGGSKSDSEDLT) the composition is skewed to basic and acidic residues. The segment at 188–279 (DDRDGGSKSD…KKRNKGRGIF (92 aa)) is disordered. Residues 272–334 (RNKGRGIFPK…NARRRIVQPM (63 aa)) constitute a DNA-binding region (homeobox; TALE-type). The interval 299–329 (YPSEEQKKQLAQDTGLTILQVNNWFINARRR) is interaction with DNA.

Belongs to the TALE/MEIS homeobox family. As to quaternary structure, interacts with pbx1 isoform b. As to expression, in the embryo, displays a broad expression pattern with high levels observed in tissues of neural cell fate such as midbrain, hindbrain, dorsal portion of the neural tube, and neural crest-derived branchial arches. Widely expressed in the adult with highest levels in brain and spleen.

It is found in the cytoplasm. The protein localises to the nucleus. Functionally, induces expression of a number of neural crest marker genes as part of a heterodimer with isoform b of pbx1, to specify neural crest cell fate. Binds to a highly conserved region in the promoter of the neural crest marker gene zic3. The sequence is that of Homeobox protein Meis1 (meis1) from Xenopus laevis (African clawed frog).